We begin with the raw amino-acid sequence, 342 residues long: Ribosomal RNA small subunit methyltransferase H (342 aa).

Residues 42–44 (GGH), D61, F88, D119, and Q126 each bind S-adenosyl-L-methionine.

The protein belongs to the methyltransferase superfamily. RsmH family.

It localises to the cytoplasm. The catalysed reaction is cytidine(1402) in 16S rRNA + S-adenosyl-L-methionine = N(4)-methylcytidine(1402) in 16S rRNA + S-adenosyl-L-homocysteine + H(+). In terms of biological role, specifically methylates the N4 position of cytidine in position 1402 (C1402) of 16S rRNA. In Corynebacterium jeikeium (strain K411), this protein is Ribosomal RNA small subunit methyltransferase H.